A 2432-amino-acid polypeptide reads, in one-letter code: uncharacterized protein (2432 aa).

It belongs to the IIV-6 261R/396L/443R family.

This is an uncharacterized protein from Invertebrate iridescent virus 6 (IIV-6).